A 443-amino-acid polypeptide reads, in one-letter code: Tol-Pal system protein TolB (443 aa).

A signal peptide spans 1-33; it reads MKIGIINTKIRTVFSAFACMIAASLVCTMPARA.

This sequence belongs to the TolB family. As to quaternary structure, the Tol-Pal system is composed of five core proteins: the inner membrane proteins TolA, TolQ and TolR, the periplasmic protein TolB and the outer membrane protein Pal. They form a network linking the inner and outer membranes and the peptidoglycan layer.

It is found in the periplasm. Part of the Tol-Pal system, which plays a role in outer membrane invagination during cell division and is important for maintaining outer membrane integrity. The protein is Tol-Pal system protein TolB of Brucella melitensis biotype 1 (strain ATCC 23456 / CCUG 17765 / NCTC 10094 / 16M).